The sequence spans 345 residues: Meiotic recombination protein rec12 (345 aa).

In terms of domain architecture, Topo IIA-type catalytic spans 5–137 (DKKKVVRSWI…LNVEASAKGL (133 aa)). The active-site O-(5'-phospho-DNA)-tyrosine intermediate is Y98. 2 residues coordinate Mg(2+): E179 and D229.

This sequence belongs to the TOP6A family. Component of the DSB catalytic core (DSBC) complex, composed of at least rec12, rec6 and rec14. The complex interacts with mde2. Requires Mg(2+) as cofactor.

The protein resides in the cytoplasm. Its subcellular location is the nucleus. It catalyses the reaction ATP-dependent breakage, passage and rejoining of double-stranded DNA.. Its function is as follows. Required for formation of the double-strand breaks (DSBs) that initiate meiotic recombination. Required for crossover recombination and chiasmatic segregation of chromosomes during meiosis I. Also involved in the faithful equational segregation of chromosomes during meiosis II. In Schizosaccharomyces pombe (strain 972 / ATCC 24843) (Fission yeast), this protein is Meiotic recombination protein rec12.